Here is a 114-residue protein sequence, read N- to C-terminus: Snake venom vascular endothelial growth factor (114 aa).

Gln1 is subject to Pyrrolidone carboxylic acid. Disulfide bonds link Cys14/Cys56, Cys45/Cys91, and Cys49/Cys93. The segment at 92–114 (ECRPGSTVNNGKRKKNPKEGEPR) is disordered.

It belongs to the PDGF/VEGF growth factor family. Snake venom VEGF subfamily. In terms of assembly, homodimer; disulfide-linked. Interacts with human VEGF receptor 1/FLT1. Interacts with human VEGF receptor 2/KDR. In terms of tissue distribution, expressed by venom gland.

The protein resides in the secreted. Its function is as follows. Snake venom vascular endothelial growth factor (svVEGF) that may contribute to venom dispersion and prey subjugation by inducing vascular permeability and hypotension. Induces an increase in capillary permeability after intradermal injection, as well as a drastic hypotensive effect after intravenous injection. The hypotension is mediated by nitric oxide (NO), which is produced by VEGF-activated endothelium NO synthase. Induces angiogenesis and migration of human vascular endothelial cells in vitro. Exhibits angiogenic activity by inducing human umbilical vein endothelial cells (HUVEC) to develop vessels in vitro. Induces cellular migration of HUVEC cells towards a wound in scratch assays, enhancing wound closure after 12 h by 49.5%. Induces dose-dependent leukocyte recruitment to the peritoneal cavity leading to increased vascular permeability in mice. The protein is Snake venom vascular endothelial growth factor of Crotalus durissus terrificus (South American rattlesnake).